The chain runs to 188 residues: Photosystem I assembly protein Ycf4 (188 aa).

Helical transmembrane passes span 28 to 48 (WATV…SSYL) and 68 to 88 (IAIG…WATI).

The protein belongs to the Ycf4 family.

It is found in the cellular thylakoid membrane. Functionally, seems to be required for the assembly of the photosystem I complex. The chain is Photosystem I assembly protein Ycf4 from Cyanothece sp. (strain PCC 7425 / ATCC 29141).